The following is a 139-amino-acid chain: ATP synthase epsilon chain (139 aa).

It belongs to the ATPase epsilon chain family. In terms of assembly, F-type ATPases have 2 components, CF(1) - the catalytic core - and CF(0) - the membrane proton channel. CF(1) has five subunits: alpha(3), beta(3), gamma(1), delta(1), epsilon(1). CF(0) has three main subunits: a, b and c.

It localises to the cell inner membrane. Produces ATP from ADP in the presence of a proton gradient across the membrane. The protein is ATP synthase epsilon chain of Salmonella typhimurium (strain LT2 / SGSC1412 / ATCC 700720).